The following is a 546-amino-acid chain: Chaperonin GroEL 1 (546 aa).

ATP-binding positions include 30 to 33 (TLGP), Lys-51, 87 to 91 (DGTTT), Gly-415, and Asp-495. Residues 527–546 (DAAPTAAPGGPGAGGPGFDF) are disordered. Gly residues predominate over residues 535–546 (GGPGAGGPGFDF).

It belongs to the chaperonin (HSP60) family. In terms of assembly, forms a cylinder of 14 subunits composed of two heptameric rings stacked back-to-back. Interacts with the co-chaperonin GroES.

The protein localises to the cytoplasm. The enzyme catalyses ATP + H2O + a folded polypeptide = ADP + phosphate + an unfolded polypeptide.. Functionally, together with its co-chaperonin GroES, plays an essential role in assisting protein folding. The GroEL-GroES system forms a nano-cage that allows encapsulation of the non-native substrate proteins and provides a physical environment optimized to promote and accelerate protein folding. The chain is Chaperonin GroEL 1 from Burkholderia lata (strain ATCC 17760 / DSM 23089 / LMG 22485 / NCIMB 9086 / R18194 / 383).